Reading from the N-terminus, the 837-residue chain is Protein TRANSPARENT TESTA 9 (837 aa).

Residues 42-192 (LRSIAEILTY…AVRALTLNVY (151 aa)) form the FPL domain. The segment at 366-386 (TEEANQQCSSTAAGMSDDGNS) is disordered. Polar residues predominate over residues 368-378 (EANQQCSSTAA).

This sequence belongs to the CLEC16A/gop-1 family.

The protein resides in the golgi apparatus membrane. Functionally, involved in membrane trafficking and vacuole development through membrane fusion at the vacuole. Required for membrane trafficking machinery and accumulation of flavonoids in the seed coat. The protein is Protein TRANSPARENT TESTA 9 of Arabidopsis thaliana (Mouse-ear cress).